The following is a 155-amino-acid chain: Small ribosomal subunit protein bS16 (155 aa).

The segment at 113 to 155 (ADGAPTGEAIQQKKKKAPKKAEAAEAEAPAEEPAAESADAASE) is disordered. Residues 136 to 146 (AEAEAPAEEPA) are compositionally biased toward acidic residues.

Belongs to the bacterial ribosomal protein bS16 family.

The polypeptide is Small ribosomal subunit protein bS16 (Mycobacteroides abscessus (strain ATCC 19977 / DSM 44196 / CCUG 20993 / CIP 104536 / JCM 13569 / NCTC 13031 / TMC 1543 / L948) (Mycobacterium abscessus)).